The primary structure comprises 908 residues: Alanine--tRNA ligase (908 aa).

Zn(2+) contacts are provided by His-596, His-600, Cys-698, and His-702.

Belongs to the class-II aminoacyl-tRNA synthetase family. Requires Zn(2+) as cofactor.

It is found in the cytoplasm. The enzyme catalyses tRNA(Ala) + L-alanine + ATP = L-alanyl-tRNA(Ala) + AMP + diphosphate. Its function is as follows. Catalyzes the attachment of alanine to tRNA(Ala) in a two-step reaction: alanine is first activated by ATP to form Ala-AMP and then transferred to the acceptor end of tRNA(Ala). Also edits incorrectly charged Ser-tRNA(Ala) and Gly-tRNA(Ala) via its editing domain. This is Alanine--tRNA ligase from Lysinibacillus sphaericus (strain C3-41).